The sequence spans 586 residues: Phosphomethylpyrimidine synthase (586 aa).

Residues 1–33 are disordered; that stretch reads MKQSVSAEQIELKSSLPGSKKVYVDGPREGMKV. Over residues 22-33 the composition is skewed to basic and acidic residues; sequence VYVDGPREGMKV. Substrate is bound by residues asparagine 193, methionine 222, tyrosine 251, histidine 287, 307 to 309, 348 to 351, and glutamate 387; these read SRG and DGLR. Histidine 391 is a binding site for Zn(2+). Tyrosine 414 lines the substrate pocket. Residue histidine 455 participates in Zn(2+) binding. Residues cysteine 535, cysteine 538, and cysteine 543 each coordinate [4Fe-4S] cluster.

Belongs to the ThiC family. Requires [4Fe-4S] cluster as cofactor.

The catalysed reaction is 5-amino-1-(5-phospho-beta-D-ribosyl)imidazole + S-adenosyl-L-methionine = 4-amino-2-methyl-5-(phosphooxymethyl)pyrimidine + CO + 5'-deoxyadenosine + formate + L-methionine + 3 H(+). It functions in the pathway cofactor biosynthesis; thiamine diphosphate biosynthesis. In terms of biological role, catalyzes the synthesis of the hydroxymethylpyrimidine phosphate (HMP-P) moiety of thiamine from aminoimidazole ribotide (AIR) in a radical S-adenosyl-L-methionine (SAM)-dependent reaction. The chain is Phosphomethylpyrimidine synthase from Bacillus cereus (strain G9842).